The following is a 143-amino-acid chain: Actin-depolymerizing factor 2 (143 aa).

An ADF-H domain is found at 5–139; it reads ASGMAVHDDC…GLDVFRSRAG (135 aa).

Belongs to the actin-binding proteins ADF family.

Actin-depolymerizing protein. Severs actin filaments (F-actin) and binds to actin monomers. The chain is Actin-depolymerizing factor 2 (ADF2) from Petunia hybrida (Petunia).